The chain runs to 634 residues: Sodium-dependent neutral amino acid transporter B(0)AT1 (634 aa).

The Cytoplasmic segment spans residues 1-41 (MVRLVLPNPGLEDRIPSLDELEVIEKEEASSRPKWDNKAQY). The residue at position 17 (serine 17) is a Phosphoserine. A helical membrane pass occupies residues 42–62 (MLTCVGFCVGLGNVWRFPYLC). Residues 63–65 (QSH) are Extracellular-facing. The chain crosses the membrane as a helical span at residues 66–86 (GGGAFMIPFLILLVLEGIPLL). Residues 87–119 (HLEFAIGQRLRKGSVGVWSSIHPALKGVGIASM) lie on the Cytoplasmic side of the membrane. The helical transmembrane segment at 120 to 140 (FVSFMVGLYYNTIIAWVMWYF) threads the bilayer. Over 141–192 (FNSFQEPLPWSECPLNQNQTGYVEECAKSSSVDYFWYRETLNISTSISDSGS) the chain is Extracellular. Asparagine 158 and asparagine 182 each carry an N-linked (GlcNAc...) asparagine glycan. A helical membrane pass occupies residues 193–213 (IQWWILLCLTCAWSVLYVCTI). Over 214–221 (RGIETTGK) the chain is Cytoplasmic. The chain crosses the membrane as a helical span at residues 222–242 (AVYITSTLPYVVLTIFLIRGL). The Extracellular portion of the chain corresponds to 243–268 (TLKGATNGIVFLFTPNITELSNPNTW). Asparagine 258 carries N-linked (GlcNAc...) asparagine glycosylation. The chain crosses the membrane as a helical span at residues 269-289 (LDAGAQVFYSFSLAFGGLISF). Residues 290–304 (SSYNSVHNNCEMDSV) are Cytoplasmic-facing. The helical transmembrane segment at 305-325 (IVSIINGFTSVYAATVVYSII) threads the bilayer. The Extracellular portion of the chain corresponds to 326-413 (GFRATERFDD…TEAITKMPVS (88 aa)). 2 N-linked (GlcNAc...) asparagine glycosylation sites follow: asparagine 354 and asparagine 368. Residues 414–434 (PLWSVLFFIMLFCLGLSSMFG) form a helical membrane-spanning segment. Over 435–456 (NMEGVVVPLQDLNITPKKWPKE) the chain is Cytoplasmic. The chain crosses the membrane as a helical span at residues 457 to 477 (LLTGLICLGTYLIAFIFTLNS). Residues 478-490 (GQYWLSLLDSYAG) are Extracellular-facing. The chain crosses the membrane as a helical span at residues 491–511 (SIPLLIIAFCEMFAVVYVYGV). The Cytoplasmic segment spans residues 512 to 531 (DRFNKDIEFMIGHKPNIFWQ). A helical transmembrane segment spans residues 532 to 552 (VTWRVVSPLIMLVIFLFFFVI). Topologically, residues 553-581 (EVNKQLMYSVWDPDYEEFPKSQKVPYPDW) are extracellular. The helical transmembrane segment at 582-602 (VYAVVVIVAGVPCLTIPCFAI) threads the bilayer. Topologically, residues 603-634 (YKLIRNYCQKSGDQHGLVNALSTASVNGDLKN) are cytoplasmic. The residue at position 627 (serine 627) is a Phosphoserine.

The protein belongs to the sodium:neurotransmitter symporter (SNF) (TC 2.A.22) family. SLC6A19 subfamily. Interacts in a tissue-specific manner with ACE2 in small intestine and with CLTRN in the kidney. Interacts with CLTRN; this interaction is required for trafficking of SLC6A19 to the plasma membrane and for its catalytic activation in kidneys. Interacts with ACE2; this interaction is required for trafficking of SLC6A19 to the plasma membrane and for its catalytic activation in intestine. Interacts with ANPEP; the interaction positively regulates its amino acid transporter activity.

The protein resides in the membrane. It carries out the reaction L-alanine(in) + Na(+)(in) = L-alanine(out) + Na(+)(out). It catalyses the reaction L-cysteine(in) + Na(+)(in) = L-cysteine(out) + Na(+)(out). The enzyme catalyses L-glutamine(in) + Na(+)(in) = L-glutamine(out) + Na(+)(out). The catalysed reaction is glycine(in) + Na(+)(in) = glycine(out) + Na(+)(out). It carries out the reaction L-isoleucine(in) + Na(+)(in) = L-isoleucine(out) + Na(+)(out). It catalyses the reaction L-leucine(in) + Na(+)(in) = L-leucine(out) + Na(+)(out). The enzyme catalyses L-methionine(in) + Na(+)(in) = L-methionine(out) + Na(+)(out). The catalysed reaction is L-phenylalanine(in) + Na(+)(in) = L-phenylalanine(out) + Na(+)(out). It carries out the reaction L-serine(in) + Na(+)(in) = L-serine(out) + Na(+)(out). It catalyses the reaction L-tryptophan(in) + Na(+)(in) = L-tryptophan(out) + Na(+)(out). The enzyme catalyses L-tyrosine(in) + Na(+)(in) = L-tyrosine(out) + Na(+)(out). The catalysed reaction is L-valine(in) + Na(+)(in) = L-valine(out) + Na(+)(out). Transporter that mediates resorption of neutral amino acids across the apical membrane of renal and intestinal epithelial cells. This uptake is sodium-dependent and chloride-independent. Requires CLTRN in kidney or ACE2 in intestine for cell surface expression and amino acid transporter activity. The polypeptide is Sodium-dependent neutral amino acid transporter B(0)AT1 (Rattus norvegicus (Rat)).